A 153-amino-acid polypeptide reads, in one-letter code: Xanthine-guanine phosphoribosyltransferase (153 aa).

5-phospho-alpha-D-ribose 1-diphosphate is bound by residues 37-38 (RG) and 89-97 (DDLVDTGNT). Asp-90 is a Mg(2+) binding site. Guanine contacts are provided by Asp-93 and Ile-136. Xanthine-binding residues include Asp-93 and Ile-136. GMP contacts are provided by residues 93 to 97 (DTGNT) and 135 to 136 (WI).

The protein belongs to the purine/pyrimidine phosphoribosyltransferase family. XGPT subfamily. As to quaternary structure, homotetramer. The cofactor is Mg(2+).

Its subcellular location is the cell inner membrane. It catalyses the reaction GMP + diphosphate = guanine + 5-phospho-alpha-D-ribose 1-diphosphate. The enzyme catalyses XMP + diphosphate = xanthine + 5-phospho-alpha-D-ribose 1-diphosphate. The catalysed reaction is IMP + diphosphate = hypoxanthine + 5-phospho-alpha-D-ribose 1-diphosphate. It functions in the pathway purine metabolism; GMP biosynthesis via salvage pathway; GMP from guanine: step 1/1. It participates in purine metabolism; XMP biosynthesis via salvage pathway; XMP from xanthine: step 1/1. Functionally, purine salvage pathway enzyme that catalyzes the transfer of the ribosyl-5-phosphate group from 5-phospho-alpha-D-ribose 1-diphosphate (PRPP) to the N9 position of the 6-oxopurines guanine and xanthine to form the corresponding ribonucleotides GMP (guanosine 5'-monophosphate) and XMP (xanthosine 5'-monophosphate), with the release of PPi. To a lesser extent, also acts on hypoxanthine. This Pasteurella multocida (strain Pm70) protein is Xanthine-guanine phosphoribosyltransferase.